The chain runs to 1094 residues: Transcriptional regulator CRZ1 (1094 aa).

Disordered regions lie at residues 1–29 (MADPASPPSFDAIFAQQPVRRSSSTSTSS), 44–81 (FNSDAPLVDEPQSLSEQARKQQRDPSKDGNNKRYLDMM), 93–428 (GRRQ…FPPS), and 477–519 (RAGA…RTLS). Composition is skewed to basic and acidic residues over residues 60-78 (QARKQQRDPSKDGNNKRYL) and 94-103 (RRQESLRKES). Position 103 is a phosphoserine (S103). The segment covering 148 to 159 (PNQPQQPSQQPP) has biased composition (low complexity). 2 stretches are compositionally biased toward polar residues: residues 166-187 (SEQSVHYASVQQPQYSSFQSSG) and 201-217 (GTTSSMNDSMLSSQISP). Low complexity-rich tracts occupy residues 228-241 (QPPQQQQQQQQQQQ) and 252-262 (EQQQQYAQGEG). Residues 286–324 (VISNTSHPSQYPSRTSSPFPQQSQSNMVPASTVNQTRTE) show a composition bias toward polar residues. Residues S288 and S329 each carry the phosphoserine modification. Residues 325–342 (SFPASRSPSPFAPQQASQ) are compositionally biased toward low complexity. 2 stretches are compositionally biased toward polar residues: residues 343-379 (TEASNHVVSTPSMGQPTYPRASSSPRTNPNSPFFNKP) and 396-412 (IVTQSTSNNHSKGLNQP). Positions 477 to 493 (RAGAARGAQRQGPQGQG) are enriched in low complexity. Residues 507–519 (PSPQSHPLPRTLS) show a composition bias toward polar residues. S508, S569, S765, and S810 each carry phosphoserine. Residues 835-888 (ITGDDGSLLPPSNRGHAMSHSRHSSTSSIRSASPALSISSQGSSFSHHSPRMDM) are disordered. The span at 858–881 (SSTSSIRSASPALSISSQGSSFSH) shows a compositional bias: low complexity. The segment at 944 to 968 (FKCPVPGCGSTFTRHFNLKGHLRSH) adopts a C2H2-type 1 zinc-finger fold. The segment at 1007–1029 (FECEGCGKKFARLDALTRHHKSE) adopts a C2H2-type 2; degenerate zinc-finger fold. The segment at 1037-1094 (THPLPTNFDGSPMSESQYKTYKGIKSTPEGSGRRLSSTASGSGSGKRRSKKSETSEED) is disordered.

Phosphorylated. Dephosphorylated by calcineurin (CNA1) which promotes nuclear localization.

The protein localises to the cytoplasm. It is found in the cytosol. The protein resides in the nucleus. Its function is as follows. DNA-binding transcriptional activator that interacts with calcineurin-dependent response element (CDRE) promoters. Activates expression of genes required to maintain cell wall integrity during stress. Activates expression of genes required for transepithelial migration through the host blood-brain barrier. Required for adaptation to host temperature during infection. This is Transcriptional regulator CRZ1 from Cryptococcus neoformans var. grubii serotype A (strain H99 / ATCC 208821 / CBS 10515 / FGSC 9487) (Filobasidiella neoformans var. grubii).